Consider the following 88-residue polypeptide: Putative membrane protein insertion efficiency factor (88 aa).

The interval 66-88 is disordered; sequence DFVPPKKDKNADSEHSCKAHHHH. Over residues 69-82 the composition is skewed to basic and acidic residues; it reads PPKKDKNADSEHSC.

The protein belongs to the UPF0161 family.

It localises to the cell membrane. In terms of biological role, could be involved in insertion of integral membrane proteins into the membrane. This is Putative membrane protein insertion efficiency factor from Listeria monocytogenes serotype 4a (strain HCC23).